We begin with the raw amino-acid sequence, 1193 residues long: Probable DNA-directed RNA polymerase II subunit RPB2 homolog (1193 aa).

Residue Asp808 participates in Mg(2+) binding. Residues Cys1137, Cys1140, Cys1155, and Cys1158 each coordinate Zn(2+). The C4-type zinc finger occupies 1137–1158; sequence CVPCKSYFKVVKTQNGFFCSGC.

This sequence belongs to the RNA polymerase beta chain family.

The catalysed reaction is RNA(n) + a ribonucleoside 5'-triphosphate = RNA(n+1) + diphosphate. Its function is as follows. Component of the DNA-dependent RNA polymerase that catalyzes the transcription of DNA into RNA using the four ribonucleoside triphosphates as substrates. Second largest component of RNA polymerase II which synthesizes mRNA precursors and many functional non-coding RNAs. Proposed to contribute to the polymerase catalytic activity and forms the polymerase active center together with the largest subunit. The protein is Probable DNA-directed RNA polymerase II subunit RPB2 homolog of Invertebrate iridescent virus 6 (IIV-6).